A 343-amino-acid polypeptide reads, in one-letter code: CRISPR-associated endonuclease Cas1 1 (343 aa).

3 residues coordinate Mn(2+): E166, H234, and E249.

The protein belongs to the CRISPR-associated endonuclease Cas1 family. In terms of assembly, homodimer, forms a heterotetramer with a Cas2 homodimer. It depends on Mg(2+) as a cofactor. Mn(2+) serves as cofactor.

CRISPR (clustered regularly interspaced short palindromic repeat), is an adaptive immune system that provides protection against mobile genetic elements (viruses, transposable elements and conjugative plasmids). CRISPR clusters contain spacers, sequences complementary to antecedent mobile elements, and target invading nucleic acids. CRISPR clusters are transcribed and processed into CRISPR RNA (crRNA). Acts as a dsDNA endonuclease. Involved in the integration of spacer DNA into the CRISPR cassette. This is CRISPR-associated endonuclease Cas1 1 from Chlorobaculum tepidum (strain ATCC 49652 / DSM 12025 / NBRC 103806 / TLS) (Chlorobium tepidum).